The primary structure comprises 295 residues: Nucleotide-binding protein LSEI_0959 (295 aa).

12-19 (GMSGAGKT) serves as a coordination point for ATP. 62 to 65 (DLRS) contributes to the GTP binding site.

The protein belongs to the RapZ-like family.

Its function is as follows. Displays ATPase and GTPase activities. This Lacticaseibacillus paracasei (strain ATCC 334 / BCRC 17002 / CCUG 31169 / CIP 107868 / KCTC 3260 / NRRL B-441) (Lactobacillus paracasei) protein is Nucleotide-binding protein LSEI_0959.